We begin with the raw amino-acid sequence, 153 residues long: Small ribosomal subunit protein uS13 (153 aa).

The disordered stretch occupies residues 134 to 153 (GQRTKSNGRRGRSMGVSRKK).

This sequence belongs to the universal ribosomal protein uS13 family.

It is found in the cytoplasm. Located at the top of the head of the 40S subunit, it contacts several helices of the 18S rRNA. In Encephalitozoon cuniculi (strain GB-M1) (Microsporidian parasite), this protein is Small ribosomal subunit protein uS13 (RPS18).